The sequence spans 404 residues: Cysteine desulfurase IscS (404 aa).

Residues 75-76, Asn155, Gln183, and 203-205 contribute to the pyridoxal 5'-phosphate site; these read AT and SAH. An N6-(pyridoxal phosphate)lysine modification is found at Lys206. Thr243 serves as a coordination point for pyridoxal 5'-phosphate. The active-site Cysteine persulfide intermediate is Cys328. Residue Cys328 coordinates [2Fe-2S] cluster.

Belongs to the class-V pyridoxal-phosphate-dependent aminotransferase family. NifS/IscS subfamily. In terms of assembly, homodimer. Forms a heterotetramer with IscU, interacts with other sulfur acceptors. It depends on pyridoxal 5'-phosphate as a cofactor.

Its subcellular location is the cytoplasm. The enzyme catalyses (sulfur carrier)-H + L-cysteine = (sulfur carrier)-SH + L-alanine. It participates in cofactor biosynthesis; iron-sulfur cluster biosynthesis. Functionally, master enzyme that delivers sulfur to a number of partners involved in Fe-S cluster assembly, tRNA modification or cofactor biosynthesis. Catalyzes the removal of elemental sulfur atoms from cysteine to produce alanine. Functions as a sulfur delivery protein for Fe-S cluster synthesis onto IscU, an Fe-S scaffold assembly protein, as well as other S acceptor proteins. The polypeptide is Cysteine desulfurase IscS (Shewanella piezotolerans (strain WP3 / JCM 13877)).